A 79-amino-acid polypeptide reads, in one-letter code: Putative antitoxin MM_2475 (79 aa).

Belongs to the UPF0330 family.

Its function is as follows. Possibly the antitoxin component of a type II toxin-antitoxin (TA) system. The sequence is that of Putative antitoxin MM_2475 from Methanosarcina mazei (strain ATCC BAA-159 / DSM 3647 / Goe1 / Go1 / JCM 11833 / OCM 88) (Methanosarcina frisia).